Reading from the N-terminus, the 30-residue chain is Toxic protein AapA1 (30 aa).

Belongs to the AapA toxin family.

It is found in the cell inner membrane. Transcription of the aapA1 gene generates a full-length transcript whose folding impedes translation. Processing of the 3' end of the aapA1 message generates a shorter transcript that becomes translatable after a structural rearrangement. The processing also makes it more susceptible to forming dsRNA with IsoA1 which leads to duplex RNA degradation by RNase 3 (rnc). May be involved in response to oxidative stress. Toxic component of a type I toxin-antitoxin (TA) system. When overexpression is induced in situ in the absence of its cognate antisense RNA antitoxin IsoA1 it leads to cell growth arrest and cell death without lysis. Neutralized by IsoA1 RNA which forms an extensive duplex with the mRNA. Binds artificial prokaryotic and eukaryotic lipid membranes, with 30-fold higher affinity for prokaryotic membranes. Molecular dynamics suggests the peptide penetrates the membrane leading to lipid reorganization and thinning of the bilayer. Induction of toxin in the absence of antitoxin RNA causes a fast conversion of cells from spiral-shaped to coccoid forms; cells have no visible membrane defects and resemble wild-type 'aging coccoids'. Toxin causes a moderate decrease in membrane potential and ATP content and alterations in peptidoglycan muropeptide abundance; GlcNAc-MurNAc dipeptides increase while GlcNAc-MurNAc tripeptides decrease (i.e. a faster phenocopy of cell aging). Deletion of all 6 AapA/IsoA TA loci in strain B128 leads to slower than wild-type conversion of H2O2-treated cells to the coccoid form. This suggests oxidative stress triggers coccoid transformation via these type I TA systems, although other factors eventually drive the morphology change. This Helicobacter pylori (strain ATCC 700392 / 26695) (Campylobacter pylori) protein is Toxic protein AapA1.